A 274-amino-acid polypeptide reads, in one-letter code: MTEFTTLLQQGNAWFFIPSAILLGALHGLEPGHSKTMMAAFIIAIKGTIKQAVMLGLAATISHTAVVWLIAFGGMVISKRFTAQSAEPWLQLISAVIIISTAFWMFWRTWRGERNWLENMHEHDHEHHHHDHEDHHDHGHHHHHEHGEYQDAHARAHANDIKRRFDGREVTNWQILLFGLTGGLIPCPAAITVLLICIQLKALTLGATLVVSFSLGLALTLVTVSVGAAISVQQVAKRWSGFNTLAKRAPYFSSLLIGLVGVYMGVHGFMGIMR.

The Periplasmic segment spans residues 1 to 12 (MTEFTTLLQQGN). The chain crosses the membrane as a helical span at residues 13–33 (AWFFIPSAILLGALHGLEPGH). Topologically, residues 34–56 (SKTMMAAFIIAIKGTIKQAVMLG) are cytoplasmic. A helical membrane pass occupies residues 57–77 (LAATISHTAVVWLIAFGGMVI). At 78 to 86 (SKRFTAQSA) the chain is on the periplasmic side. A helical membrane pass occupies residues 87–107 (EPWLQLISAVIIISTAFWMFW). Over 108 to 174 (RTWRGERNWL…FDGREVTNWQ (67 aa)) the chain is Cytoplasmic. Over residues 127-137 (HHHHDHEDHHD) the composition is skewed to basic and acidic residues. Positions 127–153 (HHHHDHEDHHDHGHHHHHEHGEYQDAH) are disordered. The chain crosses the membrane as a helical span at residues 175–195 (ILLFGLTGGLIPCPAAITVLL). Over 196-209 (ICIQLKALTLGATL) the chain is Periplasmic. A helical transmembrane segment spans residues 210-230 (VVSFSLGLALTLVTVSVGAAI). Over 231–251 (SVQQVAKRWSGFNTLAKRAPY) the chain is Cytoplasmic. The chain crosses the membrane as a helical span at residues 252–272 (FSSLLIGLVGVYMGVHGFMGI). The Periplasmic segment spans residues 273–274 (MR).

It belongs to the NiCoT transporter (TC 2.A.52) family. RcnA subfamily.

The protein resides in the cell inner membrane. Functionally, efflux system for nickel and cobalt. This is Nickel/cobalt efflux system RcnA (rcnA) from Escherichia coli O6:K15:H31 (strain 536 / UPEC).